Here is a 100-residue protein sequence, read N- to C-terminus: uncharacterized protein (100 aa).

The tract at residues 40–100 (GDQMARKATS…DPTKNKSGRG (61 aa)) is disordered.

This is an uncharacterized protein from Mycobacterium tuberculosis (strain ATCC 25618 / H37Rv).